We begin with the raw amino-acid sequence, 735 residues long: Ion-translocating oxidoreductase complex subunit C (735 aa).

4Fe-4S ferredoxin-type domains follow at residues 368 to 397 and 407 to 436; these read MGAPQEEKSCIRCSACADACPADLLPQQLY and KATAHHIADCIECGACAWVCPSNIPLVQYF. [4Fe-4S] cluster-binding residues include cysteine 377, cysteine 380, cysteine 383, cysteine 387, cysteine 416, cysteine 419, cysteine 422, and cysteine 426. The disordered stretch occupies residues 538–715; sequence KQAAHPMADS…PADPRKAAVA (178 aa). The span at 556–565 shows a compositional bias: low complexity; the sequence is KAAVEAAIAR.

It belongs to the 4Fe4S bacterial-type ferredoxin family. RnfC subfamily. In terms of assembly, the complex is composed of six subunits: RsxA, RsxB, RsxC, RsxD, RsxE and RsxG. [4Fe-4S] cluster is required as a cofactor.

The protein localises to the cell inner membrane. Part of a membrane-bound complex that couples electron transfer with translocation of ions across the membrane. Required to maintain the reduced state of SoxR. In Salmonella typhimurium (strain LT2 / SGSC1412 / ATCC 700720), this protein is Ion-translocating oxidoreductase complex subunit C.